A 464-amino-acid chain; its full sequence is MTLIYILILAGVSIFSRLLPTYGKGLILVASILVVLPTMTDWEEVGIYYTSDGIADIFILLTAYLLPLSIIANWNNIRSLLYFELILNLGVILLINFMCQDMLSFYVYFEISLAPLFILIGLYGANNRDKAADYILIYTLFSSLFMLLAIGTYEVLIGNTDYQAVSLVVLSTDLQCILFLCISAGIMVKTPLVPVHTWLPVVHSESPLAGSMLLAGVILKLAVYAIIRLIIPTLSDATVLYTPVVYVICAITIIYTSIITLRQTDLKVIVAYSSISHMAVCILGILSNSLAGINGSLILSLAHGFVSPALFIIVGGILYDRYHHRLIYYYQGLLTYMPILAIYLLILSFSNIGTPLTVNFIGELLSLTGAIGRSTILGCISAFSVLLSAAYMLKVTNRLTGGIRTPYTALTSDCTYRESLLMIALIIPTLWYGLYPNGIINMIWQGSKLLYIFVITQYNVIGNI.

The next 13 membrane-spanning stretches (helical) occupy residues leucine 18–threonine 38, isoleucine 54–tryptophan 74, serine 79–cysteine 99, methionine 102–leucine 122, alanine 131–glycine 151, valine 168–valine 188, proline 207–isoleucine 227, valine 239–isoleucine 259, leucine 266–leucine 286, leucine 297–isoleucine 317, glycine 332–isoleucine 352, threonine 375–valine 395, and leucine 420–isoleucine 440.

The protein belongs to the complex I subunit 4 family.

It localises to the mitochondrion membrane. The enzyme catalyses a ubiquinone + NADH + 5 H(+)(in) = a ubiquinol + NAD(+) + 4 H(+)(out). In terms of biological role, core subunit of the mitochondrial membrane respiratory chain NADH dehydrogenase (Complex I) that is believed to belong to the minimal assembly required for catalysis. Complex I functions in the transfer of electrons from NADH to the respiratory chain. The immediate electron acceptor for the enzyme is believed to be ubiquinone. In Candida albicans (strain SC5314 / ATCC MYA-2876) (Yeast), this protein is NADH-ubiquinone oxidoreductase chain 4 (NAD4).